The primary structure comprises 87 residues: Small ribosomal subunit protein bS20 (87 aa).

This sequence belongs to the bacterial ribosomal protein bS20 family.

In terms of biological role, binds directly to 16S ribosomal RNA. The polypeptide is Small ribosomal subunit protein bS20 (Clostridium beijerinckii (strain ATCC 51743 / NCIMB 8052) (Clostridium acetobutylicum)).